A 158-amino-acid chain; its full sequence is Phosphopantetheine adenylyltransferase (158 aa).

Position 9 (serine 9) interacts with substrate. ATP-binding positions include 9–10 (SF) and histidine 17. The substrate site is built by lysine 41, valine 73, and lysine 87. ATP-binding positions include 88–90 (GLR), glutamate 98, and 122–128 (YSFVSSS).

This sequence belongs to the bacterial CoaD family. As to quaternary structure, homohexamer. Requires Mg(2+) as cofactor.

The protein resides in the cytoplasm. It catalyses the reaction (R)-4'-phosphopantetheine + ATP + H(+) = 3'-dephospho-CoA + diphosphate. It functions in the pathway cofactor biosynthesis; coenzyme A biosynthesis; CoA from (R)-pantothenate: step 4/5. Functionally, reversibly transfers an adenylyl group from ATP to 4'-phosphopantetheine, yielding dephospho-CoA (dPCoA) and pyrophosphate. This chain is Phosphopantetheine adenylyltransferase, found in Mycolicibacterium smegmatis (strain ATCC 700084 / mc(2)155) (Mycobacterium smegmatis).